Reading from the N-terminus, the 313-residue chain is 2,3-dihydroxyphenylpropionate/2,3-dihydroxicinnamic acid 1,2-dioxygenase (313 aa).

Residue H116 is the Proton donor of the active site. Catalysis depends on H180, which acts as the Proton acceptor.

This sequence belongs to the LigB/MhpB extradiol dioxygenase family. As to quaternary structure, homotetramer. The cofactor is Fe(2+).

It catalyses the reaction 3-(2,3-dihydroxyphenyl)propanoate + O2 = (2Z,4E)-2-hydroxy-6-oxonona-2,4-dienedioate + H(+). It carries out the reaction (2E)-3-(2,3-dihydroxyphenyl)prop-2-enoate + O2 = (2Z,4E,7E)-2-hydroxy-6-oxonona-2,4,7-trienedioate + H(+). The protein operates within aromatic compound metabolism; 3-phenylpropanoate degradation. Catalyzes the non-heme iron(II)-dependent oxidative cleavage of 2,3-dihydroxyphenylpropionic acid and 2,3-dihydroxicinnamic acid into 2-hydroxy-6-ketononadienedioate and 2-hydroxy-6-ketononatrienedioate, respectively. The chain is 2,3-dihydroxyphenylpropionate/2,3-dihydroxicinnamic acid 1,2-dioxygenase from Mycobacterium sp. (strain MCS).